Consider the following 78-residue polypeptide: Acyl carrier protein (78 aa).

In terms of domain architecture, Carrier spans 2-77; the sequence is SDTADRVKKI…DAIKYIDENK (76 aa). S37 carries the post-translational modification O-(pantetheine 4'-phosphoryl)serine.

It belongs to the acyl carrier protein (ACP) family. Post-translationally, 4'-phosphopantetheine is transferred from CoA to a specific serine of apo-ACP by AcpS. This modification is essential for activity because fatty acids are bound in thioester linkage to the sulfhydryl of the prosthetic group.

It localises to the cytoplasm. Its pathway is lipid metabolism; fatty acid biosynthesis. Its function is as follows. Carrier of the growing fatty acid chain in fatty acid biosynthesis. The polypeptide is Acyl carrier protein (Novosphingobium aromaticivorans (strain ATCC 700278 / DSM 12444 / CCUG 56034 / CIP 105152 / NBRC 16084 / F199)).